Reading from the N-terminus, the 90-residue chain is Probable Fe(2+)-trafficking protein (90 aa).

Belongs to the Fe(2+)-trafficking protein family.

In terms of biological role, could be a mediator in iron transactions between iron acquisition and iron-requiring processes, such as synthesis and/or repair of Fe-S clusters in biosynthetic enzymes. This Albidiferax ferrireducens (strain ATCC BAA-621 / DSM 15236 / T118) (Rhodoferax ferrireducens) protein is Probable Fe(2+)-trafficking protein.